Reading from the N-terminus, the 365-residue chain is MTTYTNGNYTQPKTLDKDEQLAGLAVTLANAAAFPMILKSAFELKILDIFSKAGEGVFVSTSEIASQIGAKNPNAPVLLDRMLRLLASHSVLTCKLQKGEGGSQRVYGPAPLCNYLASNDGQGSLGPLLVLHHDKVMMESWFHLNDYILEGGVPFKRAHGMIQFDYTGTDERFNHVFNQGMAHHTILVMKKLLDNYNGFNDVKVLVDVGGNIGVNVSMIVAKHTHIKGINYDLPHVIADAPSYPGVEHVGGNMFESIPQADAIFMKWVLHDWSDEHCVKILNKCYESLAKGGKIILVESLIPVIPEDNLESHMVFSLDCHTLVHNQGGKERSKEDFEALASKTGFSTVDVICCAYDTWVMELYKK.

Asp-232 serves as a coordination point for S-adenosyl-L-methionine. Catalysis depends on His-270, which acts as the Proton acceptor.

This sequence belongs to the class I-like SAM-binding methyltransferase superfamily. Cation-independent O-methyltransferase family. Leaves and roots. The levels found in the leaves are 25 times greater than in the roots.

It carries out the reaction myo-inositol + S-adenosyl-L-methionine = 1D-4-O-methyl-myo-inositol + S-adenosyl-L-homocysteine + H(+). Its pathway is polyol metabolism; myo-inositol metabolism. In terms of biological role, catalyzes the methylation of myo-inositol into ononitol (1D-4-O-methyl myo-inositol), the first step in the biosynthesis of the cyclic sugar pinitol which has osmoprotective properties. This is Inositol 4-methyltransferase (IMT1) from Mesembryanthemum crystallinum (Common ice plant).